We begin with the raw amino-acid sequence, 604 residues long: Glutamine--fructose-6-phosphate aminotransferase [isomerizing] (604 aa).

Cys2 functions as the Nucleophile; for GATase activity in the catalytic mechanism. A Glutamine amidotransferase type-2 domain is found at 2–219; the sequence is CGIMGAVSER…EGDSACVTTQ (218 aa). 2 consecutive SIS domains span residues 279-427 and 454-594; these read LRAS…DNRA and LASL…VDQP. The active-site For Fru-6P isomerization activity is Lys599.

In terms of assembly, homodimer.

The protein resides in the cytoplasm. The enzyme catalyses D-fructose 6-phosphate + L-glutamine = D-glucosamine 6-phosphate + L-glutamate. Functionally, catalyzes the first step in hexosamine metabolism, converting fructose-6P into glucosamine-6P using glutamine as a nitrogen source. The chain is Glutamine--fructose-6-phosphate aminotransferase [isomerizing] from Legionella pneumophila subsp. pneumophila (strain Philadelphia 1 / ATCC 33152 / DSM 7513).